A 174-amino-acid chain; its full sequence is Transcriptional repressor NrdR (174 aa).

A zinc finger spans residues 3–34; sequence CPFCQHNDTRVIDSRVSEDGTTIRRRRECEAC. An ATP-cone domain is found at 49–139; that stretch reads PTVVKSDGGR…VYRSFQDVAD (91 aa).

The protein belongs to the NrdR family. Zn(2+) serves as cofactor.

In terms of biological role, negatively regulates transcription of bacterial ribonucleotide reductase nrd genes and operons by binding to NrdR-boxes. The chain is Transcriptional repressor NrdR from Xanthomonas axonopodis pv. citri (strain 306).